Reading from the N-terminus, the 194-residue chain is dTTP/UTP pyrophosphatase (194 aa).

D73 (proton acceptor) is an active-site residue.

It belongs to the Maf family. YhdE subfamily. It depends on a divalent metal cation as a cofactor.

It is found in the cytoplasm. The catalysed reaction is dTTP + H2O = dTMP + diphosphate + H(+). It carries out the reaction UTP + H2O = UMP + diphosphate + H(+). In terms of biological role, nucleoside triphosphate pyrophosphatase that hydrolyzes dTTP and UTP. May have a dual role in cell division arrest and in preventing the incorporation of modified nucleotides into cellular nucleic acids. The protein is dTTP/UTP pyrophosphatase of Clostridium botulinum (strain Okra / Type B1).